A 179-amino-acid polypeptide reads, in one-letter code: Large ribosomal subunit protein uL6 (179 aa).

This sequence belongs to the universal ribosomal protein uL6 family. As to quaternary structure, part of the 50S ribosomal subunit.

In terms of biological role, this protein binds to the 23S rRNA, and is important in its secondary structure. It is located near the subunit interface in the base of the L7/L12 stalk, and near the tRNA binding site of the peptidyltransferase center. In Syntrophotalea carbinolica (strain DSM 2380 / NBRC 103641 / GraBd1) (Pelobacter carbinolicus), this protein is Large ribosomal subunit protein uL6.